The chain runs to 172 residues: Translation initiation factor IF-3 (172 aa).

It belongs to the IF-3 family. As to quaternary structure, monomer.

It localises to the cytoplasm. Functionally, IF-3 binds to the 30S ribosomal subunit and shifts the equilibrium between 70S ribosomes and their 50S and 30S subunits in favor of the free subunits, thus enhancing the availability of 30S subunits on which protein synthesis initiation begins. This is Translation initiation factor IF-3 from Geobacillus stearothermophilus (Bacillus stearothermophilus).